Consider the following 1134-residue polypeptide: Envelopment polyprotein (1134 aa).

A signal peptide spans 1 to 18 (MGIWKWLVMASLVWPVLT). Topologically, residues 19–487 (LRNVYDMKIE…GFHGWATAAL (469 aa)) are lumenal. Disulfide bonds link C29–C151, C63–C157, C109–C128, C133–C138, C175–C185, C210–C247, C234–C351, and C380–C389. N134 carries an N-linked (GlcNAc...) asparagine; by host glycan. N-linked (GlcNAc...) asparagine; by host glycans are attached at residues N235 and N347. A glycan (N-linked (GlcNAc...) asparagine; by host) is linked at N399. 2 cysteine pairs are disulfide-bonded: C405-C424 and C452-C475. Residues 488-508 (LVTFCFGWVLIPAVTFIILAI) form a helical membrane-spanning segment. Residues 509 to 627 (LKFIANIFHT…LNLFRYKSRC (119 aa)) lie on the Cytoplasmic side of the membrane. The segment at 516-533 (FHTSNQENRLKSVLRKIK) is binding to the ribonucleoprotein. 2 consecutive CCHC-type zinc fingers follow at residues 545–565 (CDVC…GVSC) and 570–591 (CPYC…YKVC). 3 binding to the ribonucleoprotein regions span residues 588–605 (YKVC…KKTV), 592–603 (QVTHRFRDDLKK), and 611–625 (TPGC…RYKS). Positions 611 to 634 (TPGCYRTLNLFRYKSRCYIFTMWI) constitute an ITAM domain. Residues 615–618 (YRTL) carry the YxxL motif. A helical membrane pass occupies residues 628–648 (YIFTMWIFLLVLESILWAASA). At 649-1104 (SETPLTPVWN…EWISGIFSGN (456 aa)) the chain is on the lumenal side. 7 disulfide bridges follow: C734/C769, C738/C776, C750/C884, C764/C895, C779/C903, C805/C814, and C822/C831. The interval 756–776 (YQYETSWGCNPSDCPGCGTGC) is fusion loop. A glycan (N-linked (GlcNAc...) asparagine; by host) is linked at N927. 5 cysteine pairs are disulfide-bonded: C969-C999, C992-C1044, C1009-C1014, C1045-C1050, and C1084-C1088. Residues 1105–1125 (WIVLIVLCVFLLFSLVLLSIL) form a helical membrane-spanning segment. Positions 1121–1134 (LLSILCPVRKHKKS) are binding to the ribonucleoprotein. Residues 1126 to 1134 (CPVRKHKKS) lie on the Cytoplasmic side of the membrane.

It belongs to the hantavirus envelope glycoprotein family. Homodimer. Homotetramer; forms heterotetrameric Gn-Gc spikes in the pre-fusion conformation. Interacts (via C-terminus) with the nucleoprotein. Interacts with host TUFM; this interaction contributes to the virus-induced degradation of mitochondria by autophagy, which leads to degradation of host MAVS and inhibition of type I interferon (IFN) responses. Interacts with host MAP1LC3B; this interaction contributes to the virus-induced degradation of mitochondria by autophagy, which leads to degradation of host MAVS and inhibition of type I interferon (IFN) responses. In terms of assembly, homodimer. Homotetramer; forms heterotetrameric Gn-Gc spikes in the pre-fusion conformation. Homotrimer; forms homotrimer in the post-fusion conformation at acidic pH. Interacts (via C-terminus) with the nucleoprotein. In terms of processing, envelope polyprotein precursor is quickly cleaved in vivo just after synthesis, presumably by host signal peptidase.

Its subcellular location is the virion membrane. The protein localises to the host cell surface. It is found in the host Golgi apparatus membrane. It localises to the host endoplasmic reticulum membrane. The protein resides in the host mitochondrion. Forms homotetramers with glycoprotein C at the surface of the virion. Attaches the virion to host cell receptors including integrin ITGAV/ITGB3. This attachment induces virion internalization predominantly through clathrin-dependent endocytosis. May also bind to host C1QBP for virus entry into the host cell. Mediates the assembly and budding of infectious virus particles through its interaction with the nucleocapsid protein and the viral genome. May dysregulate normal immune and endothelial cell responses through an ITAM motif. Translocates to mitochondria, binds to host TUFM and recruits MAP1LC3B. These interactions induce mitochondrial autophagy and therefore destruction of host MAVS leading to inhibition of type I interferon (IFN) responses. Concomitant breakdown of glycoprotein N is apparently prevented by the nucleoprotein that may inhibit Gn-stimulated autophagosome-lysosome fusion. Interacts with the viral genomic RNA. Functionally, forms homotetramers with glycoprotein N at the surface of the virion. Attaches the virion to host cell receptors including integrin ITGAV/ITGB3. This attachment induces virion internalization predominantly through clathrin-dependent endocytosis. May also bind to host C1QBP for virus entry into the host cell. Class II fusion protein that promotes fusion of viral membrane with host endosomal membrane after endocytosis of the virion. The polypeptide is Envelopment polyprotein (GP) (Apodemus agrarius (Eurasian field mouse)).